A 411-amino-acid polypeptide reads, in one-letter code: Serine hydroxymethyltransferase (411 aa).

(6S)-5,6,7,8-tetrahydrofolate contacts are provided by residues leucine 117 and 121 to 123; that span reads GHL. Lysine 226 carries the post-translational modification N6-(pyridoxal phosphate)lysine.

This sequence belongs to the SHMT family. As to quaternary structure, homodimer. It depends on pyridoxal 5'-phosphate as a cofactor.

It localises to the cytoplasm. It catalyses the reaction (6R)-5,10-methylene-5,6,7,8-tetrahydrofolate + glycine + H2O = (6S)-5,6,7,8-tetrahydrofolate + L-serine. It participates in one-carbon metabolism; tetrahydrofolate interconversion. The protein operates within amino-acid biosynthesis; glycine biosynthesis; glycine from L-serine: step 1/1. Its function is as follows. Catalyzes the reversible interconversion of serine and glycine with tetrahydrofolate (THF) serving as the one-carbon carrier. This reaction serves as the major source of one-carbon groups required for the biosynthesis of purines, thymidylate, methionine, and other important biomolecules. Also exhibits THF-independent aldolase activity toward beta-hydroxyamino acids, producing glycine and aldehydes, via a retro-aldol mechanism. This is Serine hydroxymethyltransferase from Syntrophobacter fumaroxidans (strain DSM 10017 / MPOB).